The primary structure comprises 221 residues: MGWEKGLAPREKLVRLGAESLTDVELLAIFLRTGLPGVHVMQLAEDLLVQFGSLYQLMTADQSAFRTAKGVGISKYTQIKAIAELSRRLFFSRLAKEDAMLNPQATGQYLQLLLSRREREVFLVLFLDNQHHVIRHQEMFVGTINSVEVHPREIVREALKANAAALILAHNHPSGKAEPSQADRAITEQIVKACLLMEIRVLDHLVIGHGEYVSFAERGWI.

Residues A99 to I221 form the MPN domain. Zn(2+) is bound by residues H170, H172, and D183. The short motif at H170–D183 is the JAMM motif element.

It belongs to the UPF0758 family. YicR subfamily.

In Pectobacterium carotovorum subsp. carotovorum (strain PC1), this protein is UPF0758 protein PC1_4100.